Reading from the N-terminus, the 458-residue chain is Translation initiation factor eIF2B subunit gamma (458 aa).

Phosphoserine is present on Ser-291.

The protein belongs to the eIF-2B gamma/epsilon subunits family. In terms of assembly, component of the translation initiation factor 2B (eIF2B) complex which is a heterodecamer of two sets of five different subunits: alpha, beta, gamma, delta and epsilon. Subunits alpha, beta and delta comprise a regulatory subcomplex and subunits epsilon and gamma comprise a catalytic subcomplex. Within the complex, the hexameric regulatory complex resides at the center, with the two heterodimeric catalytic subcomplexes bound on opposite sides.

The protein localises to the cytoplasm. It is found in the cytosol. Its function is as follows. Acts as a component of the translation initiation factor 2B (eIF2B) complex, which catalyzes the exchange of GDP for GTP on the eukaryotic initiation factor 2 (eIF2) complex gamma subunit. Its guanine nucleotide exchange factor activity is repressed when bound to eIF2 complex phosphorylated on the alpha subunit, thereby limiting the amount of methionyl-initiator methionine tRNA available to the ribosome and consequently global translation is repressed. The chain is Translation initiation factor eIF2B subunit gamma (tif223) from Schizosaccharomyces pombe (strain 972 / ATCC 24843) (Fission yeast).